The primary structure comprises 63 residues: Alpha-toxin CsE5 (63 aa).

The LCN-type CS-alpha/beta domain maps to 2-61 (KDGYPVDSGNCKYECLKDDYCNDLCLERKADKGYCYWGKVSCYCYGLPDNSPTKTSGKCN). Intrachain disulfides connect C12–C60, C16–C36, C22–C43, and C26–C45.

Belongs to the long (4 C-C) scorpion toxin superfamily. Sodium channel inhibitor family. Alpha subfamily. Expressed by the venom gland.

It is found in the secreted. Functionally, alpha toxins bind voltage-independently at site-3 of sodium channels (Nav) and inhibit the inactivation of the activated channels, thereby blocking neuronal transmission. In Centruroides sculpturatus (Arizona bark scorpion), this protein is Alpha-toxin CsE5.